A 150-amino-acid polypeptide reads, in one-letter code: MPKYYCDYCKSYLTHDTMSVRKSHLQGRNHIKFYCDYYEAKAKETNIWNPSSIPYEITLEKLNRYSDAKKSNGSSEDNMDIDKKENSSDHNKGNVVNHSDAGNDNDDDDDEMIFLPPPPNLSGLPLPPPAVYNNQKEYQKAILRQTLTKS.

A Matrin-type zinc finger spans residues 4-36 (YYCDYCKSYLTHDTMSVRKSHLQGRNHIKFYCD). Positions 66 to 132 (SDAKKSNGSS…GLPLPPPAVY (67 aa)) are disordered. Basic and acidic residues predominate over residues 80-92 (DIDKKENSSDHNK). Over residues 103-112 (NDNDDDDDEM) the composition is skewed to acidic residues. The segment covering 115 to 130 (LPPPPNLSGLPLPPPA) has biased composition (pro residues).

The protein belongs to the U1 small nuclear ribonucleoprotein C family. U1 snRNP is composed of the 7 core Sm proteins B/B', D1, D2, D3, E, F and G that assemble in a heptameric protein ring on the Sm site of the small nuclear RNA to form the core snRNP, and at least 3 U1 snRNP-specific proteins U1-70K, U1-A and U1-C. U1-C interacts with U1 snRNA and the 5' splice-site region of the pre-mRNA.

The protein resides in the nucleus. Functionally, component of the spliceosomal U1 snRNP, which is essential for recognition of the pre-mRNA 5' splice-site and the subsequent assembly of the spliceosome. U1-C is directly involved in initial 5' splice-site recognition for both constitutive and regulated alternative splicing. The interaction with the 5' splice-site seems to precede base-pairing between the pre-mRNA and the U1 snRNA. Stimulates commitment or early (E) complex formation by stabilizing the base pairing of the 5' end of the U1 snRNA and the 5' splice-site region. The sequence is that of U1 small nuclear ribonucleoprotein C from Candida albicans (strain SC5314 / ATCC MYA-2876) (Yeast).